Reading from the N-terminus, the 274-residue chain is Probable cyclic nucleotide phosphodiesterase RPA0124 (274 aa).

Fe cation contacts are provided by Asp8, His10, Asp49, Asn79, His155, His194, and His196. AMP contacts are provided by residues His10, Asp49, and 79-80 (NH). Position 196 (His196) interacts with AMP.

This sequence belongs to the cyclic nucleotide phosphodiesterase class-III family. The cofactor is Fe(2+).

This chain is Probable cyclic nucleotide phosphodiesterase RPA0124, found in Rhodopseudomonas palustris (strain ATCC BAA-98 / CGA009).